The following is a 155-amino-acid chain: UPF0178 protein TDE_2151 (155 aa).

Belongs to the UPF0178 family.

This Treponema denticola (strain ATCC 35405 / DSM 14222 / CIP 103919 / JCM 8153 / KCTC 15104) protein is UPF0178 protein TDE_2151.